The primary structure comprises 795 residues: MIAFNSLFSLDKKRLKKLQRTLNTINSLKGQMATLSNEELQAKTTEFRKRLVNGETLDDICAEAFAVVREADERVLGLFPYDVQVIGGLVLHQGNTAEMKTGEGKTLTATMPLYLNALEGKGAMLLTNNSYLAIRDAEEMGKVYRFLGLSVGVGVSDNEEEDRDAATKRAVYSSDIVYSTSSALGFDYLIDNLASSKSQKYMPKLHYAIVDEADAVLLDMAQTPLVISGSPRVQSNLYKIADELILSFEEQVDYYFDKERQEVWIKNQGVREAERYFRIPHFYKQSNRELVRHLNLSLKAHKLFERGKDYVVDDGEIKLLDATNGRVLEGTKLQGGVHQAIEQKEHLNVTPESRAMASITYQNLFRMFTKLAGMTGTGKTAEKEFIEVYDMEVVRIPTNSPVRRIDYPDKIYTTLPEKIHATIEFVKQVHDTGQPILLVAGSVRMSELFSELLLLSGIPHSLLNAQSAVKEAQMIAEAGQKGAVTVATNMAGRGTDIKLGKGVSELGGLAVIGTERMKSQRMDLQLRGRSGRQGDIGFSQFFVSFEDDLMIESGPKWAQDYFRKNRDKVNPEKPKALGQRRFQKLFQQTQEASDGKGESARSQTIEFDSSVQLQREYVYRERNALINGESGHFSPRQIIDTVISSFIAYLDGEVEKEELIFEVNRFIFDNMSYNLQGISKEMSLEEIKNYLFKIADEILREKHNLLGDSFGDFERTAALKAIDEAWIEEVDYLQQLRTVATARQTAQRNPVFEYHKEAYKSYNIMKKEIREQTFRNLLLSEVSFNENGDLQIYFI.

ATP-binding positions include Gln-84, 102-106 (GEGKT), and Asp-496.

The protein belongs to the SecA family. As to quaternary structure, monomer and homodimer. Part of the essential Sec protein translocation apparatus which comprises SecA, SecYEG and auxiliary proteins SecDF. Other proteins may also be involved.

The protein localises to the cell membrane. It is found in the cytoplasm. The catalysed reaction is ATP + H2O + cellular proteinSide 1 = ADP + phosphate + cellular proteinSide 2.. Functionally, part of the Sec protein translocase complex. Interacts with the SecYEG preprotein conducting channel. Has a central role in coupling the hydrolysis of ATP to the transfer of proteins into and across the cell membrane, serving as an ATP-driven molecular motor driving the stepwise translocation of polypeptide chains across the membrane. This Streptococcus agalactiae serotype V (strain ATCC BAA-611 / 2603 V/R) protein is Protein translocase subunit SecA 2.